The following is a 240-amino-acid chain: Adenosylcobinamide-GDP ribazoletransferase (240 aa).

Helical transmembrane passes span 31-51 (LLYYPLVGLLFGLLLWLASHL), 62-81 (ALLLTLWVLLSGALHLDGLA), 109-129 (IAVVTLVLVLLLKFCALWVLV), 133-153 (IGAQLLLAPLIGRAAMLGLFL), and 179-199 (VLLVCVLFCLFLGGWSVLLAL).

Belongs to the CobS family. Requires Mg(2+) as cofactor.

It localises to the cell inner membrane. It carries out the reaction alpha-ribazole + adenosylcob(III)inamide-GDP = adenosylcob(III)alamin + GMP + H(+). The enzyme catalyses alpha-ribazole 5'-phosphate + adenosylcob(III)inamide-GDP = adenosylcob(III)alamin 5'-phosphate + GMP + H(+). The protein operates within cofactor biosynthesis; adenosylcobalamin biosynthesis; adenosylcobalamin from cob(II)yrinate a,c-diamide: step 7/7. Joins adenosylcobinamide-GDP and alpha-ribazole to generate adenosylcobalamin (Ado-cobalamin). Also synthesizes adenosylcobalamin 5'-phosphate from adenosylcobinamide-GDP and alpha-ribazole 5'-phosphate. The sequence is that of Adenosylcobinamide-GDP ribazoletransferase from Pseudomonas putida (strain ATCC 47054 / DSM 6125 / CFBP 8728 / NCIMB 11950 / KT2440).